Consider the following 592-residue polypeptide: Zinc metalloproteinase dpy-31 (592 aa).

Residues 1–18 (MHKIFIIFGLLSLCAAHS) form the signal peptide. A propeptide spanning residues 19–127 (LRDLSNKDEE…TEGKTRVKRK (109 aa)) is cleaved from the precursor. Positions 22–46 (LSNKDEEDPPSSAPGVRKRRMMSEE) are disordered. Positions 127 to 326 (KFIGSNLRRW…IRLMNKIYCS (200 aa)) constitute a Peptidase M12A domain. The N-linked (GlcNAc...) asparagine glycan is linked to Asn167. 2 cysteine pairs are disulfide-bonded: Cys170–Cys325 and Cys193–Cys214. His222 provides a ligand contact to Zn(2+). Glu223 is a catalytic residue. Residues His226 and His232 each coordinate Zn(2+). The EGF-like domain maps to 349–361 (CRCPDGFTGQYCE). An intrachain disulfide couples Cys371 to Cys399. The CUB domain occupies 371 to 487 (CGGKISLTRS…KGFEARARAV (117 aa)). The N-linked (GlcNAc...) asparagine glycan is linked to Asn438. The region spanning 490 to 540 (AGNWNSWSPWTACSATCGACGSRMRTRTCPPGNACSGEPVETQICNTQACT) is the TSP type-1 domain. 3 disulfide bridges follow: Cys502–Cys534, Cys506–Cys539, and Cys518–Cys524.

Requires Zn(2+) as cofactor. In terms of tissue distribution, expressed in hypodermis, rectal and vulval epithelial cells and amphid socket cells.

It localises to the secreted. Functionally, metalloprotease which cleaves the carboxyl terminus of procollagens, such as sqt-3, to mature collagens. Involved in cuticular collagen maturation. This is Zinc metalloproteinase dpy-31 from Caenorhabditis elegans.